The primary structure comprises 249 residues: Triosephosphate isomerase (249 aa).

9-11 (NWK) is a binding site for substrate. Residue H94 is the Electrophile of the active site. The active-site Proton acceptor is E166. Residues G172 and 232-233 (GG) contribute to the substrate site.

The protein belongs to the triosephosphate isomerase family. As to quaternary structure, homodimer.

The protein localises to the cytoplasm. The catalysed reaction is D-glyceraldehyde 3-phosphate = dihydroxyacetone phosphate. It participates in carbohydrate biosynthesis; gluconeogenesis. Its pathway is carbohydrate degradation; glycolysis; D-glyceraldehyde 3-phosphate from glycerone phosphate: step 1/1. Involved in the gluconeogenesis. Catalyzes stereospecifically the conversion of dihydroxyacetone phosphate (DHAP) to D-glyceraldehyde-3-phosphate (G3P). The protein is Triosephosphate isomerase of Xylella fastidiosa (strain 9a5c).